The chain runs to 101 residues: Urease subunit beta (101 aa).

Belongs to the urease beta subunit family. In terms of assembly, heterotrimer of UreA (gamma), UreB (beta) and UreC (alpha) subunits. Three heterotrimers associate to form the active enzyme.

It localises to the cytoplasm. It catalyses the reaction urea + 2 H2O + H(+) = hydrogencarbonate + 2 NH4(+). Its pathway is nitrogen metabolism; urea degradation; CO(2) and NH(3) from urea (urease route): step 1/1. In Rhizobium etli (strain CIAT 652), this protein is Urease subunit beta.